The chain runs to 602 residues: DNA ligase (602 aa).

Glutamate 262 serves as a coordination point for ATP. Lysine 264 functions as the N6-AMP-lysine intermediate in the catalytic mechanism. ATP contacts are provided by arginine 269, arginine 284, glutamate 314, phenylalanine 354, arginine 431, and lysine 437.

It belongs to the ATP-dependent DNA ligase family. Monomer. The cofactor is Mg(2+). Mn(2+) serves as cofactor.

It catalyses the reaction ATP + (deoxyribonucleotide)n-3'-hydroxyl + 5'-phospho-(deoxyribonucleotide)m = (deoxyribonucleotide)n+m + AMP + diphosphate.. The catalysed reaction is ADP + (deoxyribonucleotide)n-3'-hydroxyl + 5'-phospho-(deoxyribonucleotide)m = (deoxyribonucleotide)n+m + AMP + phosphate.. It carries out the reaction GTP + (deoxyribonucleotide)n-3'-hydroxyl + 5'-phospho-(deoxyribonucleotide)m = (deoxyribonucleotide)n+m + GMP + diphosphate.. With respect to regulation, inhibited in the presence of 100 mM KCl, NaCl or NH(4)Cl. In terms of biological role, DNA ligase that seals nicks in double-stranded DNA during DNA replication, DNA recombination and DNA repair. Can also use ADP, but not NAD(+). This Aeropyrum pernix (strain ATCC 700893 / DSM 11879 / JCM 9820 / NBRC 100138 / K1) protein is DNA ligase.